The primary structure comprises 195 residues: UPF0157 protein BH1888 (195 aa).

The span at methionine 1–proline 12 shows a compositional bias: polar residues. The tract at residues methionine 1–valine 21 is disordered.

This sequence belongs to the UPF0157 (GrpB) family.

The polypeptide is UPF0157 protein BH1888 (Halalkalibacterium halodurans (strain ATCC BAA-125 / DSM 18197 / FERM 7344 / JCM 9153 / C-125) (Bacillus halodurans)).